A 213-amino-acid chain; its full sequence is Sclerostin (213 aa).

A signal peptide spans 1–28 (MQLSLAPCLACLLVHAAFVAVESQGWQA). N-linked (GlcNAc...) asparagine glycosylation occurs at Asn-53. 4 disulfide bridges follow: Cys-80–Cys-134, Cys-94–Cys-148, Cys-105–Cys-165, and Cys-109–Cys-167. One can recognise a CTCK domain in the interval 82–172 (ELHYTRFVTD…ASCKCKRLTR (91 aa)). Asn-175 carries N-linked (GlcNAc...) asparagine glycosylation. Positions 178–213 (ELKDFGPETARPQKGRKPRPRARGAKANQAELENAY) are disordered. Residues 190-201 (QKGRKPRPRARG) are compositionally biased toward basic residues.

The protein belongs to the sclerostin family. Interacts with LRP4 (via the extracellular domain); the interaction facilitates the inhibition of Wnt signaling. Interacts with LRP5 (via the first two YWTD-EGF repeat domains); the interaction inhibits Wnt-mediated signaling. Interacts with LRP6.

Its subcellular location is the secreted. In terms of biological role, negative regulator of bone growth that acts through inhibition of Wnt signaling and bone formation. The protein is Sclerostin of Rattus norvegicus (Rat).